A 325-amino-acid polypeptide reads, in one-letter code: Plasminogen (325 aa).

Kringle domains follow at residues A80–C146 and L159–V217. 4 disulfide bridges follow: C81-C146, C102-C135, C124-C141, and C188-C212.

It belongs to the peptidase S1 family. Plasminogen subfamily.

The protein localises to the secreted. It carries out the reaction Preferential cleavage: Lys-|-Xaa &gt; Arg-|-Xaa, higher selectivity than trypsin. Converts fibrin into soluble products.. Functionally, plasmin dissolves the fibrin of blood clots and acts as a proteolytic factor in a variety of other processes including embryonic development, tissue remodeling, tumor invasion, and inflammation. The polypeptide is Plasminogen (Petromyzon marinus (Sea lamprey)).